We begin with the raw amino-acid sequence, 174 residues long: Protein RESTRICTED TEV MOVEMENT 1 (174 aa).

Residues 1-152 enclose the Jacalin-type lectin domain; sequence MKIGPVGKHD…LQYIGVYLRP (152 aa).

The protein belongs to the jacalin lectin family. Self-interacts. Interacts with RTM3. In terms of tissue distribution, expressed at low levels exclusively in phloem-associated cells (e.g. sieve elements and adjacent cells).

Its subcellular location is the cytoplasm. Functionally, required for the restriction of long-distance movement of the pathogenic tobacco etch virus (TEV) without causing a hypersensitive response or inducing systemic acquired resistance. The sequence is that of Protein RESTRICTED TEV MOVEMENT 1 (RTM1) from Arabidopsis thaliana (Mouse-ear cress).